We begin with the raw amino-acid sequence, 378 residues long: Alginate lyase (378 aa).

Residues 1–28 (MQTPKLIRPTLLSMAIVSSMAWATGASA) form the signal peptide. Substrate is bound by residues 67–68 (SK), 140–141 (HT), and Tyr258.

The protein belongs to the polysaccharide lyase 5 family.

The protein localises to the periplasm. The catalysed reaction is Eliminative cleavage of alginate to give oligosaccharides with 4-deoxy-alpha-L-erythro-hex-4-enuronosyl groups at their non-reducing ends and beta-D-mannuronate at their reducing end.. In terms of biological role, catalyzes the depolymerization of alginate by cleaving the beta-1,4 glycosidic bond between two adjacent sugar residues via a beta-elimination mechanism. May serve to degrade mislocalized alginate that is trapped in the periplasmic space. The protein is Alginate lyase of Pseudomonas syringae pv. tomato (strain ATCC BAA-871 / DC3000).